Here is a 622-residue protein sequence, read N- to C-terminus: MDENEDSSIAATMGFSGFGKKARTFDLEAMFEQTRRTAVERSKQTLEAREKEEQLSNKSPVIKGAPSSSGQKKTKASGSSSGSEDSSDDELIGPPLPPNVTGDHGDELIGPPLPPGYKDSDDEDDEEHEDDDNPVKDIPDSHEITLQHGTKTVSALGLDPSGARLVTGGYDYDVRFWDFAGMDASLQAFRSLQPCECHQIKSLQYSNTGDVILVVAGNSQAKVLDRDGFPVMECVKGDQYIVDMANTKGHTAMLNGGCWHPKIKEEFMTCSNDGTVRTWDVSNEKKHKGIFKPRSVQGKPVIPTCCTYSRDGKFIAAGCQDGSIQIWDRNMSVHTKFHCRQAHTPGTDTSCVTFSYGGNVLATRGGDDTLKTWDIRKFKNPLNVASGLENFFPMTDCCFSPDDKLLITGTSVKRGIGDGKLLFFDVVTFQKIYEIQVTEASVVRCLWHPKLNQIMVGTGNGLAKVYYDPNRSQRGAKLCVVKTQRKERQAETLTQDYIITPHALPMFREPRQRSTRKQLEKDRLDPVKSHKPEPPVAGPGRGGRVGTHGGTLSSFIVKNIALDKTDDSNAREAILRHAKDAEQNPYWVAPAYSKTQPNTVFAEVDSDEEEPDNEPEWKKRKI.

Basic and acidic residues predominate over residues 36–55 (RTAVERSKQTLEAREKEEQL). The disordered stretch occupies residues 36–141 (RTAVERSKQT…DNPVKDIPDS (106 aa)). Residues 67-84 (SSSGQKKTKASGSSSGSE) are compositionally biased toward low complexity. The segment covering 120-132 (SDDEDDEEHEDDD) has biased composition (acidic residues). WD repeat units lie at residues 148–187 (HGTK…ASLQ), 195–236 (CECH…ECVK), 249–289 (GHTA…KHKG), 298–337 (GKPV…HTKF), 344–383 (TPGT…NPLN), 387–434 (GLEN…KIYE), and 437–476 (VTEA…QRGA). The segment covering 508-533 (REPRQRSTRKQLEKDRLDPVKSHKPE) has biased composition (basic and acidic residues). Disordered stretches follow at residues 508-549 (REPR…GTHG) and 602-622 (AEVD…KRKI). A compositionally biased stretch (gly residues) spans 539–549 (PGRGGRVGTHG). The segment covering 604–614 (VDSDEEEPDNE) has biased composition (acidic residues).

It belongs to the WD repeat GAD-1 family.

The protein is WD repeat-containing protein 70 (wdr70) of Xenopus laevis (African clawed frog).